A 210-amino-acid polypeptide reads, in one-letter code: Large ribosomal subunit protein uL4 (210 aa).

Residues 41–51 are compositionally biased toward polar residues; it reads ANARQGTQSTK. 2 disordered regions span residues 41 to 60 and 67 to 98; these read ANAR…QGSS and KGTG…DFSK.

This sequence belongs to the universal ribosomal protein uL4 family. As to quaternary structure, part of the 50S ribosomal subunit.

Its function is as follows. One of the primary rRNA binding proteins, this protein initially binds near the 5'-end of the 23S rRNA. It is important during the early stages of 50S assembly. It makes multiple contacts with different domains of the 23S rRNA in the assembled 50S subunit and ribosome. Forms part of the polypeptide exit tunnel. The polypeptide is Large ribosomal subunit protein uL4 (Dehalococcoides mccartyi (strain ATCC BAA-2100 / JCM 16839 / KCTC 5957 / BAV1)).